We begin with the raw amino-acid sequence, 1051 residues long: Ubiquitin-activating enzyme E1 2 (1051 aa).

Residues 1 to 32 (MLPRKREIVAGEVEDLQKKTRAGEGEATREEG) are compositionally biased toward basic and acidic residues. The disordered stretch occupies residues 1–42 (MLPRKREIVAGEVEDLQKKTRAGEGEATREEGDAAMAGRGNE). 2 tandem repeats follow at residues 56–194 (GRET…GSVF) and 453–605 (GSTL…QMVI). The segment at 56–605 (GRETMKPLFG…GAKCNTQMVI (550 aa)) is 2 approximate repeats. Residues alanine 472, aspartate 498, arginine 509, lysine 522, and 570-571 (DN) each bind ATP. The active-site Glycyl thioester intermediate is the cysteine 626.

The protein belongs to the ubiquitin-activating E1 family. Monomer.

It catalyses the reaction ATP + ubiquitin + [E1 ubiquitin-activating enzyme]-L-cysteine = AMP + diphosphate + S-ubiquitinyl-[E1 ubiquitin-activating enzyme]-L-cysteine.. It participates in protein modification; protein ubiquitination. Its function is as follows. Activates ubiquitin by first adenylating its C-terminal glycine residue with ATP, and thereafter linking this residue to the side chain of a cysteine residue in E1, yielding a ubiquitin-E1 thioester and free AMP. The chain is Ubiquitin-activating enzyme E1 2 (UBA2) from Triticum aestivum (Wheat).